The sequence spans 314 residues: Nodulation protein D 1 (314 aa).

The HTH lysR-type domain maps to 6–63 (LDLNLLVVLDALLTERTLTAAASSINLSQPAMSAAVARLRDYFNDELFTTSGRERVLT). Residues 23-42 (LTAAASSINLSQPAMSAAVA) constitute a DNA-binding region (H-T-H motif).

The protein belongs to the LysR transcriptional regulatory family.

Its function is as follows. NodD regulates the expression of the nodABCFE genes which encode other nodulation proteins. NodD is also a negative regulator of its own expression. Binds flavenoids as inducers. The polypeptide is Nodulation protein D 1 (nodD1) (Mesorhizobium japonicum (strain LMG 29417 / CECT 9101 / MAFF 303099) (Mesorhizobium loti (strain MAFF 303099))).